A 208-amino-acid chain; its full sequence is Flavin-dependent thymidylate synthase (208 aa).

In terms of domain architecture, ThyX spans 1 to 208 (MEVICKHYTP…QYLFEDCLKH (208 aa)). FAD is bound by residues Ser-50 and 74-76 (RHR). Residues 71-74 (ELSR), 84-86 (SSR), and Lys-147 each bind dUMP. The ThyX motif signature appears at 74-84 (RHRIASLSVKS). Residues 163–165 (NAR) and Asn-169 contribute to the FAD site. Residue Arg-174 participates in dUMP binding. Arg-174 serves as the catalytic Involved in ionization of N3 of dUMP, leading to its activation.

The protein belongs to the thymidylate synthase ThyX family. Homotetramer. Requires FAD as cofactor.

It carries out the reaction dUMP + (6R)-5,10-methylene-5,6,7,8-tetrahydrofolate + NADPH + H(+) = dTMP + (6S)-5,6,7,8-tetrahydrofolate + NADP(+). Its pathway is pyrimidine metabolism; dTTP biosynthesis. Its function is as follows. Catalyzes the reductive methylation of 2'-deoxyuridine-5'-monophosphate (dUMP) to 2'-deoxythymidine-5'-monophosphate (dTMP) while utilizing 5,10-methylenetetrahydrofolate (mTHF) as the methyl donor, and NADPH and FADH(2) as the reductant. The chain is Flavin-dependent thymidylate synthase from Helicobacter pylori (strain J99 / ATCC 700824) (Campylobacter pylori J99).